The sequence spans 446 residues: Phosphoglucosamine mutase (446 aa).

Ser-99 acts as the Phosphoserine intermediate in catalysis. Residues Ser-99, Asp-242, Asp-244, and Asp-246 each coordinate Mg(2+). Ser-99 bears the Phosphoserine mark.

It belongs to the phosphohexose mutase family. Mg(2+) serves as cofactor. In terms of processing, activated by phosphorylation.

The enzyme catalyses alpha-D-glucosamine 1-phosphate = D-glucosamine 6-phosphate. Its function is as follows. Catalyzes the conversion of glucosamine-6-phosphate to glucosamine-1-phosphate. The sequence is that of Phosphoglucosamine mutase from Campylobacter hominis (strain ATCC BAA-381 / DSM 21671 / CCUG 45161 / LMG 19568 / NCTC 13146 / CH001A).